The sequence spans 291 residues: Protein/nucleic acid deglycase HchA (291 aa).

Positions 1–18 (MSNERDTSRTPTPDHAEH) are enriched in basic and acidic residues. The segment at 1–20 (MSNERDTSRTPTPDHAEHNA) is disordered. The active-site Nucleophile is the C188.

It belongs to the peptidase C56 family. HchA subfamily.

Its subcellular location is the cytoplasm. It catalyses the reaction N(omega)-(1-hydroxy-2-oxopropyl)-L-arginyl-[protein] + H2O = lactate + L-arginyl-[protein] + H(+). The catalysed reaction is N(6)-(1-hydroxy-2-oxopropyl)-L-lysyl-[protein] + H2O = lactate + L-lysyl-[protein] + H(+). The enzyme catalyses S-(1-hydroxy-2-oxopropyl)-L-cysteinyl-[protein] + H2O = lactate + L-cysteinyl-[protein] + H(+). It carries out the reaction N(omega)-(1-hydroxy-2-oxoethyl)-L-arginyl-[protein] + H2O = L-arginyl-[protein] + glycolate + H(+). It catalyses the reaction N(6)-(1-hydroxy-2-oxoethyl)-L-lysyl-[protein] + H2O = glycolate + L-lysyl-[protein] + H(+). The catalysed reaction is S-(1-hydroxy-2-oxoethyl)-L-cysteinyl-[protein] + H2O = glycolate + L-cysteinyl-[protein] + H(+). The enzyme catalyses N(2)-(1-hydroxy-2-oxopropyl)-dGTP + H2O = lactate + dGTP + H(+). It carries out the reaction N(2)-(1-hydroxy-2-oxopropyl)-GTP + H2O = lactate + GTP + H(+). It catalyses the reaction N(2)-(1-hydroxy-2-oxopropyl)-GDP + H2O = lactate + GDP + H(+). The catalysed reaction is N(2)-(1-hydroxy-2-oxopropyl)-GMP + H2O = lactate + GMP + H(+). The enzyme catalyses N(2)-(1-hydroxy-2-oxoethyl)-dGTP + H2O = dGTP + glycolate + H(+). It carries out the reaction N(2)-(1-hydroxy-2-oxoethyl)-GTP + H2O = glycolate + GTP + H(+). It catalyses the reaction N(2)-(1-hydroxy-2-oxoethyl)-GDP + H2O = glycolate + GDP + H(+). The catalysed reaction is N(2)-(1-hydroxy-2-oxoethyl)-GMP + H2O = glycolate + GMP + H(+). The enzyme catalyses an N(2)-(1-hydroxy-2-oxopropyl)-guanosine in RNA + H2O = a guanosine in RNA + lactate + H(+). It carries out the reaction an N(2)-(1-hydroxy-2-oxopropyl)-2'-deoxyguanosine in DNA + H2O = a 2'-deoxyguanosine in DNA + lactate + H(+). It catalyses the reaction an N(2)-(1-hydroxy-2-oxoethyl)-guanosine in RNA + H2O = a guanosine in RNA + glycolate + H(+). The catalysed reaction is an N(2)-(1-hydroxy-2-oxoethyl)-2'-deoxyguanosine in DNA + H2O = a 2'-deoxyguanosine in DNA + glycolate + H(+). Its function is as follows. Protein and nucleotide deglycase that catalyzes the deglycation of the Maillard adducts formed between amino groups of proteins or nucleotides and reactive carbonyl groups of glyoxals. Thus, functions as a protein deglycase that repairs methylglyoxal- and glyoxal-glycated proteins, and releases repaired proteins and lactate or glycolate, respectively. Deglycates cysteine, arginine and lysine residues in proteins, and thus reactivates these proteins by reversing glycation by glyoxals. Acts on early glycation intermediates (hemithioacetals and aminocarbinols), preventing the formation of Schiff bases and advanced glycation endproducts (AGE). Also functions as a nucleotide deglycase able to repair glycated guanine in the free nucleotide pool (GTP, GDP, GMP, dGTP) and in DNA and RNA. Is thus involved in a major nucleotide repair system named guanine glycation repair (GG repair), dedicated to reversing methylglyoxal and glyoxal damage via nucleotide sanitization and direct nucleic acid repair. Plays an important role in protecting cells from carbonyl stress. The chain is Protein/nucleic acid deglycase HchA from Pseudomonas aeruginosa (strain LESB58).